The following is a 384-amino-acid chain: 8-amino-7-oxononanoate synthase (384 aa).

Position 21 (Arg-21) interacts with substrate. Pyridoxal 5'-phosphate is bound at residue 108-109; the sequence is GF. His-133 is a substrate binding site. Ser-179, His-207, and Thr-233 together coordinate pyridoxal 5'-phosphate. Lys-236 is subject to N6-(pyridoxal phosphate)lysine. Thr-352 is a substrate binding site.

It belongs to the class-II pyridoxal-phosphate-dependent aminotransferase family. BioF subfamily. In terms of assembly, homodimer. Requires pyridoxal 5'-phosphate as cofactor.

The catalysed reaction is 6-carboxyhexanoyl-[ACP] + L-alanine + H(+) = (8S)-8-amino-7-oxononanoate + holo-[ACP] + CO2. It participates in cofactor biosynthesis; biotin biosynthesis. Its function is as follows. Catalyzes the decarboxylative condensation of pimeloyl-[acyl-carrier protein] and L-alanine to produce 8-amino-7-oxononanoate (AON), [acyl-carrier protein], and carbon dioxide. The protein is 8-amino-7-oxononanoate synthase of Escherichia coli O6:H1 (strain CFT073 / ATCC 700928 / UPEC).